A 586-amino-acid polypeptide reads, in one-letter code: Arginine--tRNA ligase (586 aa).

Residues A131 to H141 carry the 'HIGH' region motif.

Belongs to the class-I aminoacyl-tRNA synthetase family. In terms of assembly, monomer.

The protein localises to the cytoplasm. It carries out the reaction tRNA(Arg) + L-arginine + ATP = L-arginyl-tRNA(Arg) + AMP + diphosphate. This chain is Arginine--tRNA ligase, found in Nitrosomonas europaea (strain ATCC 19718 / CIP 103999 / KCTC 2705 / NBRC 14298).